The primary structure comprises 365 residues: Methionine import ATP-binding protein MetN (365 aa).

The region spanning 26-261 is the ABC transporter domain; sequence VRLVDLKRRF…PQSDITKSLL (236 aa). 58 to 65 is an ATP binding site; sequence GRSGAGKS.

The protein belongs to the ABC transporter superfamily. Methionine importer (TC 3.A.1.24) family. The complex is composed of two ATP-binding proteins (MetN), two transmembrane proteins (MetI) and a solute-binding protein (MetQ).

It is found in the cell inner membrane. The catalysed reaction is L-methionine(out) + ATP + H2O = L-methionine(in) + ADP + phosphate + H(+). It catalyses the reaction D-methionine(out) + ATP + H2O = D-methionine(in) + ADP + phosphate + H(+). Its function is as follows. Part of the ABC transporter complex MetNIQ involved in methionine import. Responsible for energy coupling to the transport system. In Mesorhizobium japonicum (strain LMG 29417 / CECT 9101 / MAFF 303099) (Mesorhizobium loti (strain MAFF 303099)), this protein is Methionine import ATP-binding protein MetN.